The following is a 129-amino-acid chain: UPF0148 protein APE_0207 (129 aa).

It belongs to the UPF0148 family.

The chain is UPF0148 protein APE_0207 from Aeropyrum pernix (strain ATCC 700893 / DSM 11879 / JCM 9820 / NBRC 100138 / K1).